The primary structure comprises 432 residues: Adenylosuccinate synthetase (432 aa).

GTP-binding positions include G13–K19 and G41–T43. D14 functions as the Proton acceptor in the catalytic mechanism. Mg(2+)-binding residues include D14 and G41. IMP-binding positions include D14–K17, N39–H42, T130, R144, Q225, T240, and R304. H42 acts as the Proton donor in catalysis. A300–R306 is a binding site for substrate. GTP-binding positions include R306, K332–D334, and S415–G417.

It belongs to the adenylosuccinate synthetase family. Homodimer. Mg(2+) is required as a cofactor.

Its subcellular location is the cytoplasm. The catalysed reaction is IMP + L-aspartate + GTP = N(6)-(1,2-dicarboxyethyl)-AMP + GDP + phosphate + 2 H(+). It participates in purine metabolism; AMP biosynthesis via de novo pathway; AMP from IMP: step 1/2. In terms of biological role, plays an important role in the de novo pathway of purine nucleotide biosynthesis. Catalyzes the first committed step in the biosynthesis of AMP from IMP. This Histophilus somni (strain 2336) (Haemophilus somnus) protein is Adenylosuccinate synthetase.